The chain runs to 190 residues: Corticoliberin (190 aa).

The signal sequence occupies residues 1–24 (MRLPLLVSVGVLLVALLPSPPCRA). Positions 25–147 (LLSRGPIPGA…QEAPAARKRR (123 aa)) are excised as a propeptide. Disordered stretches follow at residues 33–53 (GARQ…LPQP) and 115–151 (PRRP…SQEP). Residues 41–53 (PQPLSFFQPLPQP) are compositionally biased toward low complexity. A188 is modified (alanine amide).

Belongs to the sauvagine/corticotropin-releasing factor/urotensin I family. As to quaternary structure, interacts (via C-terminus) with CRFR1 (via N-terminal extracellular domain). Produced by the hypothalamus.

Its subcellular location is the secreted. Hormone regulating the release of corticotropin from pituitary gland. Induces NLRP6 in intestinal epithelial cells, hence may influence gut microbiota profile. This chain is Corticoliberin (CRH), found in Ovis aries (Sheep).